The primary structure comprises 65 residues: Large ribosomal subunit protein uL29 (65 aa).

Residues 30–49 (ERSSVAMGGAPSSPGKMRSI) are disordered.

This sequence belongs to the universal ribosomal protein uL29 family.

The sequence is that of Large ribosomal subunit protein uL29 from Picrophilus torridus (strain ATCC 700027 / DSM 9790 / JCM 10055 / NBRC 100828 / KAW 2/3).